We begin with the raw amino-acid sequence, 747 residues long: Oxysterol-binding protein-related protein 11 (747 aa).

Position 1 is an N-acetylmethionine (Met-1). Residues Met-1–Lys-50 are disordered. Position 15 is a phosphoserine (Ser-15). The residue at position 27 (Thr-27) is a Phosphothreonine. The region spanning Met-58–Gln-155 is the PH domain. Tyr-62 bears the Phosphotyrosine mark. The disordered stretch occupies residues Thr-158–Pro-188. The span at Ser-170–Ser-184 shows a compositional bias: low complexity. Phosphoserine occurs at positions 172, 174, 177, 181, 184, and 189. The segment covering Glu-689 to Glu-713 has biased composition (basic and acidic residues). The disordered stretch occupies residues Glu-689 to Thr-714.

The protein belongs to the OSBP family. In terms of assembly, heterodimer with OSBPL9. Present at highest levels in ovary, testis, kidney, liver, stomach, brain, and adipose tissue. Strong expression (at protein level) in epithelial cells of kidney tubules, testicular tubules, caecum, and skin. Present at low levels in subcutaneous and visceral adipose tissue (at protein level).

It localises to the late endosome membrane. The protein resides in the golgi apparatus. The protein localises to the trans-Golgi network membrane. The enzyme catalyses a 1,2-diacyl-sn-glycero-3-phospho-(1D-myo-inositol 4-phosphate)(out) + a 1,2-diacyl-sn-glycero-3-phospho-L-serine(in) = a 1,2-diacyl-sn-glycero-3-phospho-(1D-myo-inositol 4-phosphate)(in) + a 1,2-diacyl-sn-glycero-3-phospho-L-serine(out). Its function is as follows. Plays a role in regulating ADIPOQ and FABP4 levels in differentiating adipocytes and is also involved in regulation of adipocyte triglyceride storage. Weakly binds 25-hydroxycholesterol. Interacts with OSBPL9 to function as lipid transfer proteins. Together they form a heterodimer that localizes at the ER-trans-Golgi membrane contact sites, and exchanges phosphatidylserine (1,2-diacyl-sn-glycero-3-phospho-L-serine, PS) for phosphatidylinositol-4-phosphate (1,2-diacyl-sn-glycero-3-phospho-(1D-myo-inositol 4-phosphate), PI(4)P) between the two organelles, a step that is critical for sphingomyelin synthesis in the Golgi complex. The polypeptide is Oxysterol-binding protein-related protein 11 (OSBPL11) (Homo sapiens (Human)).